The primary structure comprises 421 residues: Gamma-glutamyl phosphate reductase (421 aa).

The protein belongs to the gamma-glutamyl phosphate reductase family.

The protein localises to the cytoplasm. It carries out the reaction L-glutamate 5-semialdehyde + phosphate + NADP(+) = L-glutamyl 5-phosphate + NADPH + H(+). Its pathway is amino-acid biosynthesis; L-proline biosynthesis; L-glutamate 5-semialdehyde from L-glutamate: step 2/2. Catalyzes the NADPH-dependent reduction of L-glutamate 5-phosphate into L-glutamate 5-semialdehyde and phosphate. The product spontaneously undergoes cyclization to form 1-pyrroline-5-carboxylate. This chain is Gamma-glutamyl phosphate reductase, found in Leifsonia xyli subsp. xyli (strain CTCB07).